Here is a 271-residue protein sequence, read N- to C-terminus: Imidazole glycerol phosphate synthase subunit HisF (271 aa).

Catalysis depends on residues Asp-12 and Asp-136.

The protein belongs to the HisA/HisF family. Heterodimer of HisH and HisF.

The protein resides in the cytoplasm. The enzyme catalyses 5-[(5-phospho-1-deoxy-D-ribulos-1-ylimino)methylamino]-1-(5-phospho-beta-D-ribosyl)imidazole-4-carboxamide + L-glutamine = D-erythro-1-(imidazol-4-yl)glycerol 3-phosphate + 5-amino-1-(5-phospho-beta-D-ribosyl)imidazole-4-carboxamide + L-glutamate + H(+). It participates in amino-acid biosynthesis; L-histidine biosynthesis; L-histidine from 5-phospho-alpha-D-ribose 1-diphosphate: step 5/9. In terms of biological role, IGPS catalyzes the conversion of PRFAR and glutamine to IGP, AICAR and glutamate. The HisF subunit catalyzes the cyclization activity that produces IGP and AICAR from PRFAR using the ammonia provided by the HisH subunit. In Haloarcula marismortui (strain ATCC 43049 / DSM 3752 / JCM 8966 / VKM B-1809) (Halobacterium marismortui), this protein is Imidazole glycerol phosphate synthase subunit HisF.